The primary structure comprises 1108 residues: DNA-directed RNA polymerase subunit beta (1108 aa).

Residues 1081-1108 form a disordered region; sequence SPRRTPARPTIDYSALDDTDDKEGATTF.

This sequence belongs to the RNA polymerase beta chain family. In terms of assembly, in cyanobacteria the RNAP catalytic core is composed of 2 alpha, 1 beta, 1 beta', 1 gamma and 1 omega subunit. When a sigma factor is associated with the core the holoenzyme is formed, which can initiate transcription.

The enzyme catalyses RNA(n) + a ribonucleoside 5'-triphosphate = RNA(n+1) + diphosphate. Its function is as follows. DNA-dependent RNA polymerase catalyzes the transcription of DNA into RNA using the four ribonucleoside triphosphates as substrates. The sequence is that of DNA-directed RNA polymerase subunit beta from Thermosynechococcus vestitus (strain NIES-2133 / IAM M-273 / BP-1).